A 167-amino-acid chain; its full sequence is uncharacterized protein (167 aa).

The segment at 115-167 (SYRSQPQLGFKSTPPAHSSVFHHSVKAPKEDQAQEAASRPLTSQDGWNPNIKK) is disordered.

This is an uncharacterized protein from Homo sapiens (Human).